Consider the following 109-residue polypeptide: Spermidine export protein MdtI (109 aa).

A run of 4 helical transmembrane segments spans residues 6 to 26, 35 to 55, 64 to 84, and 88 to 108; these read FYHI…NILL, VWLG…LAQA, AYAL…WILF, and LNYK…MIKL.

Belongs to the drug/metabolite transporter (DMT) superfamily. Small multidrug resistance (SMR) (TC 2.A.7.1) family. MdtI subfamily. In terms of assembly, forms a complex with MdtJ.

The protein resides in the cell inner membrane. Catalyzes the excretion of spermidine. This Yersinia enterocolitica serotype O:8 / biotype 1B (strain NCTC 13174 / 8081) protein is Spermidine export protein MdtI.